The chain runs to 71 residues: Mitochondrial import protein 1 (71 aa).

A helical transmembrane segment spans residues 22–44 (YAAINLGLPFLNGVMLGFGEIFA).

Belongs to the MIM1 family. Component of the mitochondrial outer import machinery (MIM) complex containing at least mim1 and mim2. Interacts with mim2. Interacts with mitophagy receptor atg43.

Its subcellular location is the mitochondrion outer membrane. Its function is as follows. Component of the mitochondrial outer import machinery (MIM) complex that mediates transport of proteins into mitochondrial compartments. Promotes the insertion of tom70 into the outer mitochondrial membrane. Promotes the insertion of atg43 into the outer mitochondrial membrane. The MIM complex cooperates with the receptor tom70 in binding of precursor proteins and promotes their insertion and assembly into the outer membrane. Involved in import of the subset of proteins with multiple alpha-helical transmembrane segments. Required for the assembly of the TOM (translocase of outer membrane) receptor complex, which is responsible for the recognition and translocation of cytosolically synthesized mitochondrial preproteins. This Schizosaccharomyces pombe (strain 972 / ATCC 24843) (Fission yeast) protein is Mitochondrial import protein 1.